A 497-amino-acid polypeptide reads, in one-letter code: Probable malate:quinone oxidoreductase (497 aa).

It belongs to the MQO family. FAD is required as a cofactor.

The catalysed reaction is (S)-malate + a quinone = a quinol + oxaloacetate. The protein operates within carbohydrate metabolism; tricarboxylic acid cycle; oxaloacetate from (S)-malate (quinone route): step 1/1. This is Probable malate:quinone oxidoreductase from Tolumonas auensis (strain DSM 9187 / NBRC 110442 / TA 4).